The sequence spans 472 residues: Cysteine--tRNA ligase (472 aa).

Cysteine 28 is a binding site for Zn(2+). The 'HIGH' region motif lies at 30–40 (PTVYDYTHIGH). Zn(2+)-binding residues include cysteine 207, histidine 232, and glutamate 236. Residues 264–268 (KMSKS) carry the 'KMSKS' region motif. An ATP-binding site is contributed by lysine 267.

This sequence belongs to the class-I aminoacyl-tRNA synthetase family. Requires Zn(2+) as cofactor.

The protein resides in the cytoplasm. It catalyses the reaction tRNA(Cys) + L-cysteine + ATP = L-cysteinyl-tRNA(Cys) + AMP + diphosphate. In Aeropyrum pernix (strain ATCC 700893 / DSM 11879 / JCM 9820 / NBRC 100138 / K1), this protein is Cysteine--tRNA ligase (cysS).